A 120-amino-acid chain; its full sequence is Small ribosomal subunit protein eS25 (120 aa).

The tract at residues 1–32 (MPPKAGQTKKAKMEAANKGAKKTTKKWSKGQS) is disordered. The span at 19-28 (GAKKTTKKWS) shows a compositional bias: basic residues.

The protein belongs to the eukaryotic ribosomal protein eS25 family.

The protein is Small ribosomal subunit protein eS25 (RPS25) of Leishmania infantum.